The sequence spans 348 residues: UPF0283 membrane protein PBPRA2435 (348 aa).

Helical transmembrane passes span 71 to 91, 97 to 117, and 211 to 231; these read GLLI…VVSA, WLAL…ITAL, and EAAV…LVAW.

Belongs to the UPF0283 family.

The protein localises to the cell inner membrane. The protein is UPF0283 membrane protein PBPRA2435 of Photobacterium profundum (strain SS9).